The following is a 92-amino-acid chain: Small ribosomal subunit protein bS20 (92 aa).

The interval 1 to 25 is disordered; sequence MANSAQARKRARQAAKANSHNSALR.

Belongs to the bacterial ribosomal protein bS20 family.

Binds directly to 16S ribosomal RNA. This is Small ribosomal subunit protein bS20 from Paraburkholderia phymatum (strain DSM 17167 / CIP 108236 / LMG 21445 / STM815) (Burkholderia phymatum).